Consider the following 455-residue polypeptide: MALWGGRFQGETSALFKLFNDSLPVDYRLFEQDVVGSIAWADAIASVGIITATECSDLKKALNELLVEVKGDPAIILASGAEDIHSFVESALIAKVGDLGKKLHTGRSRNDQVATDLKLWCQSEGAALVARLQTLRSELIALAEREFDAVMPGYTHLQRAQPVTFGHWCLAYVEMIERDLSRLTDALKRANTCPLGSGALAGTAYQMDRHALAAALNFASPTLNSLDSVSDRDHVVELCSTASISMMHLSRMAEDLIFFNSGEAGFISLSDEVTSGSSLMPQKKNPDALELIRGKTGRVYGSLVGILTTMKALPLAYNKDMQEDKEGLFDVVDSWAICLDMAALVLSGLVVNRPNALLAAQQGYANATELADYLVSKGMPFREAHHVVGVAVVAAIAKKIPLEGFTLAEFKTFADIIEDDVYPNLTIEACLAKRDVLGGTALAQVKQAIAAKNAG.

The protein belongs to the lyase 1 family. Argininosuccinate lyase subfamily.

It is found in the cytoplasm. It catalyses the reaction 2-(N(omega)-L-arginino)succinate = fumarate + L-arginine. It functions in the pathway amino-acid biosynthesis; L-arginine biosynthesis; L-arginine from L-ornithine and carbamoyl phosphate: step 3/3. The polypeptide is Argininosuccinate lyase (Shewanella sp. (strain MR-4)).